The following is a 355-amino-acid chain: Methylthioribose-1-phosphate isomerase (355 aa).

Substrate-binding positions include 50 to 52 (RGA), Arg-93, and Gln-198. Asp-239 acts as the Proton donor in catalysis. Position 249–250 (249–250 (NK)) interacts with substrate.

It belongs to the eIF-2B alpha/beta/delta subunits family. MtnA subfamily. Homodimer.

It catalyses the reaction 5-(methylsulfanyl)-alpha-D-ribose 1-phosphate = 5-(methylsulfanyl)-D-ribulose 1-phosphate. It functions in the pathway amino-acid biosynthesis; L-methionine biosynthesis via salvage pathway; L-methionine from S-methyl-5-thio-alpha-D-ribose 1-phosphate: step 1/6. Functionally, catalyzes the interconversion of methylthioribose-1-phosphate (MTR-1-P) into methylthioribulose-1-phosphate (MTRu-1-P). The chain is Methylthioribose-1-phosphate isomerase from Geobacillus thermodenitrificans (strain NG80-2).